The primary structure comprises 606 residues: WD repeat-containing protein 1 (606 aa).

WD repeat units follow at residues Glu-4 to Ile-45, Pro-48 to Thr-87, Ile-93 to Thr-135, Ser-138 to Gly-176, Lys-180 to Gly-218, Val-224 to Val-263, Ser-270 to Lys-306, Lys-311 to Ser-351, Ser-358 to Val-408, Leu-432 to Ile-474, Lys-480 to Val-518, Ser-523 to Leu-561, and Thr-566 to Ile-604. 4 positions are modified to N6-acetyllysine: Lys-28, Lys-81, Lys-95, and Lys-115. Phosphotyrosine is present on Tyr-238. Position 480 is an N6-acetyllysine (Lys-480).

Belongs to the WD repeat AIP1 family.

Its subcellular location is the cytoplasm. The protein resides in the cytoskeleton. It is found in the cell projection. The protein localises to the podosome. Functionally, induces disassembly of actin filaments in conjunction with ADF/cofilin family proteins. Enhances cofilin-mediated actin severing. Involved in cytokinesis. Involved in chemotactic cell migration by restricting lamellipodial membrane protrusions. Involved in myocardium sarcomere organization. Required for cardiomyocyte growth and maintenance. Involved in megakaryocyte maturation and platelet shedding. Required for the establishment of planar cell polarity (PCP) during follicular epithelium development and for cell shape changes during PCP; the function seems to implicate cooperation with CFL1 and/or DSTN/ADF. Involved in the generation/maintenance of cortical tension. Involved in assembly and maintenance of epithelial apical cell junctions and plays a role in the organization of the perijunctional actomyosin belt. This chain is WD repeat-containing protein 1 (Wdr1), found in Rattus norvegicus (Rat).